The following is a 335-amino-acid chain: Homeobox protein unc-39 (335 aa).

2 disordered regions span residues 27-56 and 269-294; these read FTSS…GGPP and RRQR…NGGS. Positions 28 to 41 are enriched in low complexity; that stretch reads TSSSNSNTSNSSTS. A compositionally biased stretch (polar residues) spans 42–53; it reads PSHISDQFSSSG. Residues 225-277 constitute a DNA-binding region (homeobox); sequence KDSSRKFLKQFFRNVSEYPTQEQKREISRATGLKIVQISNWFKNRRQRDKSNN. A compositionally biased stretch (low complexity) spans 276 to 294; the sequence is NNSAKCSPPSSSSSTNGGS.

The protein belongs to the SIX/Sine oculis homeobox family.

The protein localises to the nucleus. Functionally, probable transcription factor required for differentiation and migration of neuronal cells, such as RID and CAN neurons. Specifically, plays a role in the terminal differentiation of RID peptidergic neurons. Also required for CAN neuron axon guidance. The chain is Homeobox protein unc-39 from Caenorhabditis elegans.